The chain runs to 325 residues: tRNA(Ile)-lysidine synthase (325 aa).

Residue 35–40 (SGGQDS) participates in ATP binding.

It belongs to the tRNA(Ile)-lysidine synthase family.

The protein localises to the cytoplasm. The catalysed reaction is cytidine(34) in tRNA(Ile2) + L-lysine + ATP = lysidine(34) in tRNA(Ile2) + AMP + diphosphate + H(+). Functionally, ligates lysine onto the cytidine present at position 34 of the AUA codon-specific tRNA(Ile) that contains the anticodon CAU, in an ATP-dependent manner. Cytidine is converted to lysidine, thus changing the amino acid specificity of the tRNA from methionine to isoleucine. This Gloeobacter violaceus (strain ATCC 29082 / PCC 7421) protein is tRNA(Ile)-lysidine synthase.